Consider the following 131-residue polypeptide: UPF0102 protein YraN (131 aa).

Residues 1 to 19 are compositionally biased toward polar residues; sequence MATVPTRSGSPRQLTTKQT. Residues 1–21 form a disordered region; that stretch reads MATVPTRSGSPRQLTTKQTGD.

This sequence belongs to the UPF0102 family.

The chain is UPF0102 protein YraN from Escherichia coli O7:K1 (strain IAI39 / ExPEC).